We begin with the raw amino-acid sequence, 366 residues long: Glucose 1-dehydrogenase (366 aa).

Cys-39 serves as a coordination point for Zn(2+). Thr-41 contributes to the substrate binding site. The Zn(2+) site is built by His-66 and Glu-67. Residue Asn-89 participates in substrate binding. The Zn(2+) site is built by Cys-93, Cys-96, Cys-99, and Cys-107. Substrate is bound by residues Glu-114, Gln-150, and Asp-154. Gln-150 lines the Zn(2+) pocket. NADP(+) contacts are provided by residues 189 to 192 (TGPI), 211 to 213 (NRR), 277 to 279 (FGF), 305 to 307 (LVN), and Lys-354. Asn-307 is a binding site for substrate.

The protein belongs to the zinc-containing alcohol dehydrogenase family. Glucose 1-dehydrogenase subfamily. In terms of assembly, homotetramer. It depends on Zn(2+) as a cofactor.

It catalyses the reaction D-glucose + NAD(+) = D-glucono-1,5-lactone + NADH + H(+). The catalysed reaction is D-glucose + NADP(+) = D-glucono-1,5-lactone + NADPH + H(+). The enzyme catalyses D-galactose + NAD(+) = D-galactono-1,4-lactone + NADH + H(+). It carries out the reaction D-galactose + NADP(+) = D-galactono-1,5-lactone + NADPH + H(+). It catalyses the reaction an aldopyranose + NAD(+) = aldono-1,5-lactone + NADH + H(+). The catalysed reaction is an aldopyranose + NADP(+) = aldono-1,5-lactone + NADPH + H(+). Inhibited by EDTA in vitro. Functionally, catalyzes the NAD(P)(+)-dependent oxidation of D-glucose to D-gluconate via gluconolactone. Displays broad substrate specificity since it is able to catalyze the oxidation of a number of alternative aldose sugars, such as D-galactose, D-xylose and L-arabinose, to the corresponding glyconate. Can utilize both NAD(+) and NADP(+) as electron acceptor. Physiologically, seems to be involved in the degradation of both glucose and galactose through a non-phosphorylative variant of the Entner-Doudoroff pathway. The protein is Glucose 1-dehydrogenase of Saccharolobus solfataricus (Sulfolobus solfataricus).